Reading from the N-terminus, the 37-residue chain is Large ribosomal subunit protein bL36 (37 aa).

The protein belongs to the bacterial ribosomal protein bL36 family.

The sequence is that of Large ribosomal subunit protein bL36 from Synechococcus sp. (strain WH7803).